The chain runs to 432 residues: Enolase (432 aa).

Residue Gln-163 coordinates (2R)-2-phosphoglycerate. The active-site Proton donor is Glu-205. Mg(2+) contacts are provided by Asp-242, Glu-288, and Asp-315. Lys-340, Arg-369, Ser-370, and Lys-391 together coordinate (2R)-2-phosphoglycerate. Lys-340 serves as the catalytic Proton acceptor.

The protein belongs to the enolase family. It depends on Mg(2+) as a cofactor.

It is found in the cytoplasm. The protein localises to the secreted. Its subcellular location is the cell surface. The catalysed reaction is (2R)-2-phosphoglycerate = phosphoenolpyruvate + H2O. It functions in the pathway carbohydrate degradation; glycolysis; pyruvate from D-glyceraldehyde 3-phosphate: step 4/5. Functionally, catalyzes the reversible conversion of 2-phosphoglycerate (2-PG) into phosphoenolpyruvate (PEP). It is essential for the degradation of carbohydrates via glycolysis. The chain is Enolase from Enterococcus faecalis (strain ATCC 700802 / V583).